Consider the following 97-residue polypeptide: Na(+)/H(+) antiporter subunit F1 (97 aa).

Helical transmembrane passes span 3-23 (FKIFIITALIIVVLSMLAMLI), 35-55 (VVALDAIGLQLMAVIALFSIL), and 60-80 (YMLVVILMVGILAFLGTAVFS).

It belongs to the CPA3 antiporters (TC 2.A.63) subunit F family. In terms of assembly, may form a heterooligomeric complex that consists of seven subunits: mnhA1, mnhB1, mnhC1, mnhD1, mnhE1, mnhF1 and mnhG1.

The protein localises to the cell membrane. In terms of biological role, mnh complex is a Na(+)/H(+) antiporter involved in Na(+) excretion. In Staphylococcus epidermidis (strain ATCC 35984 / DSM 28319 / BCRC 17069 / CCUG 31568 / BM 3577 / RP62A), this protein is Na(+)/H(+) antiporter subunit F1 (mnhF1).